A 477-amino-acid chain; its full sequence is Ribulose bisphosphate carboxylase large chain (477 aa).

Positions Met1–Ser2 are excised as a propeptide. Pro3 is modified (N-acetylproline). Substrate is bound by residues Asn123 and Thr173. Lys175 serves as the catalytic Proton acceptor. Residue Lys177 participates in substrate binding. Residues Lys201, Asp203, and Glu204 each contribute to the Mg(2+) site. The residue at position 201 (Lys201) is an N6-carboxylysine. Catalysis depends on His294, which acts as the Proton acceptor. Residues Arg295, His327, and Ser379 each contribute to the substrate site.

It belongs to the RuBisCO large chain family. Type I subfamily. Heterohexadecamer of 8 large chains and 8 small chains; disulfide-linked. The disulfide link is formed within the large subunit homodimers. Mg(2+) serves as cofactor. In terms of processing, the disulfide bond which can form in the large chain dimeric partners within the hexadecamer appears to be associated with oxidative stress and protein turnover.

Its subcellular location is the plastid. It localises to the chloroplast. The catalysed reaction is 2 (2R)-3-phosphoglycerate + 2 H(+) = D-ribulose 1,5-bisphosphate + CO2 + H2O. It carries out the reaction D-ribulose 1,5-bisphosphate + O2 = 2-phosphoglycolate + (2R)-3-phosphoglycerate + 2 H(+). RuBisCO catalyzes two reactions: the carboxylation of D-ribulose 1,5-bisphosphate, the primary event in carbon dioxide fixation, as well as the oxidative fragmentation of the pentose substrate in the photorespiration process. Both reactions occur simultaneously and in competition at the same active site. The sequence is that of Ribulose bisphosphate carboxylase large chain from Avena sativa (Oat).